The following is a 550-amino-acid chain: Arginine--tRNA ligase (550 aa).

Residues alanine 125–histidine 135 carry the 'HIGH' region motif.

The protein belongs to the class-I aminoacyl-tRNA synthetase family. In terms of assembly, monomer.

Its subcellular location is the cytoplasm. The enzyme catalyses tRNA(Arg) + L-arginine + ATP = L-arginyl-tRNA(Arg) + AMP + diphosphate. This chain is Arginine--tRNA ligase, found in Lawsonia intracellularis (strain PHE/MN1-00).